A 262-amino-acid chain; its full sequence is Rhomboid-type serine protease 2 (262 aa).

Residues 1-16 (MNWKSYVFPGGHPPAA) lie on the Cytoplasmic side of the membrane. The chain crosses the membrane as a helical span at residues 17–37 (LTTGLVVFLTAIYLLSFIFAL). Residues 38–57 (REDLSLAPESLFKLQMSRLS) lie on the Lumenal side of the membrane. A helical transmembrane segment spans residues 58–78 (LYPLIHLSLPHLLFNVLAIWA). At 79–89 (PLNLFEETHGT) the chain is on the cytoplasmic side. The chain crosses the membrane as a helical span at residues 90–110 (VYTGVFLNLSALFAGILYCLL). Residues 111-112 (GK) lie on the Lumenal side of the membrane. The helical transmembrane segment at 113–133 (LLYPEALVAGASGWCFTLFAY) threads the bilayer. Residue Ser124 is the Nucleophile of the active site. Over 134-151 (YSFKESQIRPRTRIFRTD) the chain is Cytoplasmic. The chain crosses the membrane as a helical span at residues 152–168 (YSIPTLYTPLVLLVAIA). The Lumenal portion of the chain corresponds to 169–174 (VVIPGS). Residues 175–191 (SFWGHFFGLCVGYAIGY) traverse the membrane as a helical segment. His179 is an active-site residue. At 192-262 (KESWFNKITP…DNSGTVLGTA (71 aa)) the chain is on the cytoplasmic side. The interval 243–262 (STETPLPLHNDNSGTVLGTA) is disordered. Polar residues predominate over residues 252 to 262 (NDNSGTVLGTA).

This sequence belongs to the peptidase S54 family. As to quaternary structure, interacts with SNX3.

The protein localises to the golgi apparatus membrane. It is found in the golgi apparatus. Its subcellular location is the cis-Golgi network membrane. The enzyme catalyses Cleaves type-1 transmembrane domains using a catalytic dyad composed of serine and histidine that are contributed by different transmembrane domains.. Functionally, probable rhomboid-type serine protease that catalyzes intramembrane proteolysis. This is Rhomboid-type serine protease 2 (RBD2) from Saccharomyces cerevisiae (strain ATCC 204508 / S288c) (Baker's yeast).